The primary structure comprises 355 residues: UDP-N-acetylglucosamine--N-acetylmuramyl-(pentapeptide) pyrophosphoryl-undecaprenol N-acetylglucosamine transferase (355 aa).

UDP-N-acetyl-alpha-D-glucosamine is bound by residues 14 to 16, asparagine 126, arginine 162, serine 190, isoleucine 243, 262 to 267, and glutamine 287; these read TGG and ALTVSE.

The protein belongs to the glycosyltransferase 28 family. MurG subfamily.

It is found in the cell inner membrane. The catalysed reaction is di-trans,octa-cis-undecaprenyl diphospho-N-acetyl-alpha-D-muramoyl-L-alanyl-D-glutamyl-meso-2,6-diaminopimeloyl-D-alanyl-D-alanine + UDP-N-acetyl-alpha-D-glucosamine = di-trans,octa-cis-undecaprenyl diphospho-[N-acetyl-alpha-D-glucosaminyl-(1-&gt;4)]-N-acetyl-alpha-D-muramoyl-L-alanyl-D-glutamyl-meso-2,6-diaminopimeloyl-D-alanyl-D-alanine + UDP + H(+). Its pathway is cell wall biogenesis; peptidoglycan biosynthesis. Cell wall formation. Catalyzes the transfer of a GlcNAc subunit on undecaprenyl-pyrophosphoryl-MurNAc-pentapeptide (lipid intermediate I) to form undecaprenyl-pyrophosphoryl-MurNAc-(pentapeptide)GlcNAc (lipid intermediate II). This chain is UDP-N-acetylglucosamine--N-acetylmuramyl-(pentapeptide) pyrophosphoryl-undecaprenol N-acetylglucosamine transferase, found in Vibrio vulnificus (strain YJ016).